The sequence spans 601 residues: NADH-quinone oxidoreductase subunit C/D (601 aa).

The interval 1 to 191 (MKLTRDFPHN…DPFMLDAAKQ (191 aa)) is NADH dehydrogenase I subunit C. An NADH dehydrogenase I subunit D region spans residues 215–601 (DYMFLNLGPN…IDFVMSDVDR (387 aa)).

This sequence in the N-terminal section; belongs to the complex I 30 kDa subunit family. In the C-terminal section; belongs to the complex I 49 kDa subunit family. NDH-1 is composed of 13 different subunits. Subunits NuoB, CD, E, F, and G constitute the peripheral sector of the complex.

It localises to the cell inner membrane. The enzyme catalyses a quinone + NADH + 5 H(+)(in) = a quinol + NAD(+) + 4 H(+)(out). Its function is as follows. NDH-1 shuttles electrons from NADH, via FMN and iron-sulfur (Fe-S) centers, to quinones in the respiratory chain. The immediate electron acceptor for the enzyme in this species is believed to be ubiquinone. Couples the redox reaction to proton translocation (for every two electrons transferred, four hydrogen ions are translocated across the cytoplasmic membrane), and thus conserves the redox energy in a proton gradient. The protein is NADH-quinone oxidoreductase subunit C/D of Shewanella oneidensis (strain ATCC 700550 / JCM 31522 / CIP 106686 / LMG 19005 / NCIMB 14063 / MR-1).